The primary structure comprises 654 residues: Acetyl-coenzyme A synthetase (654 aa).

Residues 190–193 and threonine 313 contribute to the CoA site; that span reads RGGK. Residues 389 to 391, 413 to 418, aspartate 504, and arginine 519 each bind ATP; these read GEP and DTWWQT. A CoA-binding site is contributed by serine 527. Arginine 530 contributes to the ATP binding site. Mg(2+) is bound by residues valine 541 and valine 546. Residue lysine 613 is modified to N6-acetyllysine.

The protein belongs to the ATP-dependent AMP-binding enzyme family. The cofactor is Mg(2+). In terms of processing, acetylated. Deacetylation by the SIR2-homolog deacetylase activates the enzyme.

It catalyses the reaction acetate + ATP + CoA = acetyl-CoA + AMP + diphosphate. Its function is as follows. Catalyzes the conversion of acetate into acetyl-CoA (AcCoA), an essential intermediate at the junction of anabolic and catabolic pathways. AcsA undergoes a two-step reaction. In the first half reaction, AcsA combines acetate with ATP to form acetyl-adenylate (AcAMP) intermediate. In the second half reaction, it can then transfer the acetyl group from AcAMP to the sulfhydryl group of CoA, forming the product AcCoA. The chain is Acetyl-coenzyme A synthetase from Leptospira borgpetersenii serovar Hardjo-bovis (strain JB197).